The sequence spans 105 residues: MSGDCIASLKMVESQPLNSKEVEYVEKLLDPFDPVDTVERFTHNPNDPISVPIDPALIWSRKAIMRLIGLVVVLIINFPKVRDKINLNPYLVWVITTLILMGVFY.

The next 2 helical transmembrane spans lie at A56–I76 and I85–Y105.

It is found in the membrane. This is an uncharacterized protein from Aedes vexans (Inland floodwater mosquito).